Here is a 389-residue protein sequence, read N- to C-terminus: 23S rRNA (uracil(747)-C(5))-methyltransferase RlmC (389 aa).

[4Fe-4S] cluster-binding residues include C5, C13, C16, and C94. S-adenosyl-L-methionine-binding residues include Q219, F248, E275, and N321. The Nucleophile role is filled by C348.

It belongs to the class I-like SAM-binding methyltransferase superfamily. RNA M5U methyltransferase family. RlmC subfamily.

It carries out the reaction uridine(747) in 23S rRNA + S-adenosyl-L-methionine = 5-methyluridine(747) in 23S rRNA + S-adenosyl-L-homocysteine + H(+). Its function is as follows. Catalyzes the formation of 5-methyl-uridine at position 747 (m5U747) in 23S rRNA. This Mannheimia succiniciproducens (strain KCTC 0769BP / MBEL55E) protein is 23S rRNA (uracil(747)-C(5))-methyltransferase RlmC.